The primary structure comprises 214 residues: Ribosomal RNA small subunit methyltransferase G (214 aa).

S-adenosyl-L-methionine contacts are provided by residues Gly-56, Phe-61, 107 to 108 (IE), and Arg-125.

Belongs to the methyltransferase superfamily. RNA methyltransferase RsmG family.

It is found in the cytoplasm. In terms of biological role, specifically methylates the N7 position of a guanine in 16S rRNA. The polypeptide is Ribosomal RNA small subunit methyltransferase G (Syntrophomonas wolfei subsp. wolfei (strain DSM 2245B / Goettingen)).